The sequence spans 317 residues: Phospho-N-acetylmuramoyl-pentapeptide-transferase (317 aa).

9 consecutive transmembrane segments (helical) span residues 3-23 (VIIYSVLISFLFSILQGPLFI), 48-68 (GTPTMGGIIFITTAIIAMIIM), 72-92 (LNSNAVFAFVCFFSFAMIGLI), 112-132 (FLLQIIVSAAISYYAYIRFGS), 141-161 (ITWTLPPIVYMAAVVFYFVAV), 171-191 (LDGLASSVTILVVTFFTVVSF), 193-213 (WHQYELSVFCGIIVGILLGFL), 238-258 (AIALVLKLPLLVIIVGGIYVI), and 297-317 (VVSVFSIVTVILCLIAFLSLI).

The protein belongs to the glycosyltransferase 4 family. MraY subfamily. The cofactor is Mg(2+).

The protein localises to the cell membrane. The enzyme catalyses UDP-N-acetyl-alpha-D-muramoyl-L-alanyl-gamma-D-glutamyl-meso-2,6-diaminopimeloyl-D-alanyl-D-alanine + di-trans,octa-cis-undecaprenyl phosphate = di-trans,octa-cis-undecaprenyl diphospho-N-acetyl-alpha-D-muramoyl-L-alanyl-D-glutamyl-meso-2,6-diaminopimeloyl-D-alanyl-D-alanine + UMP. It functions in the pathway cell wall biogenesis; peptidoglycan biosynthesis. Functionally, catalyzes the initial step of the lipid cycle reactions in the biosynthesis of the cell wall peptidoglycan: transfers peptidoglycan precursor phospho-MurNAc-pentapeptide from UDP-MurNAc-pentapeptide onto the lipid carrier undecaprenyl phosphate, yielding undecaprenyl-pyrophosphoryl-MurNAc-pentapeptide, known as lipid I. The sequence is that of Phospho-N-acetylmuramoyl-pentapeptide-transferase from Clostridium acetobutylicum (strain ATCC 824 / DSM 792 / JCM 1419 / IAM 19013 / LMG 5710 / NBRC 13948 / NRRL B-527 / VKM B-1787 / 2291 / W).